The following is a 163-amino-acid chain: MADSSFDVVSKVDRQEVDNALNQAAKELSTRFDFRGTDTTIAWKGEEAIEIVSSTEERVKAAVDVFKEKLVRRDISMKAFDAGDPQPSGKTYKVNGTIKEGITSEQAKKITKIIRDEGPKGVKAQIQGDEIRVSSKKRDDLQTVISLLKQADLEVALQFVNYR.

Belongs to the YajQ family.

Nucleotide-binding protein. The protein is Nucleotide-binding protein Mmcs_0777 of Mycobacterium sp. (strain MCS).